Consider the following 142-residue polypeptide: Small ribosomal subunit protein uS19 (142 aa).

This sequence belongs to the universal ribosomal protein uS19 family. As to quaternary structure, component of the small ribosomal subunit. Mature ribosomes consist of a small (40S) and a large (60S) subunit. The 40S subunit contains about 32 different proteins and 1 molecule of RNA (18S). The 60S subunit contains 45 different proteins and 3 molecules of RNA (25S, 5.8S and 5S).

It is found in the cytoplasm. Its function is as follows. Component of the ribosome, a large ribonucleoprotein complex responsible for the synthesis of proteins in the cell. The small ribosomal subunit (SSU) binds messenger RNAs (mRNAs) and translates the encoded message by selecting cognate aminoacyl-transfer RNA (tRNA) molecules. The large subunit (LSU) contains the ribosomal catalytic site termed the peptidyl transferase center (PTC), which catalyzes the formation of peptide bonds, thereby polymerizing the amino acids delivered by tRNAs into a polypeptide chain. The nascent polypeptides leave the ribosome through a tunnel in the LSU and interact with protein factors that function in enzymatic processing, targeting, and the membrane insertion of nascent chains at the exit of the ribosomal tunnel. RPS15 has a role in the late stage of the assembly of pre-40S particles within the nucleus and controls their export to the cytoplasm. The chain is Small ribosomal subunit protein uS19 (RPS15) from Candida albicans (strain SC5314 / ATCC MYA-2876) (Yeast).